The sequence spans 508 residues: Histidine ammonia-lyase (508 aa).

Residues 143 to 145 (ASG) constitute a cross-link (5-imidazolinone (Ala-Gly)). Ser-144 bears the 2,3-didehydroalanine (Ser) mark.

It belongs to the PAL/histidase family. Contains an active site 4-methylidene-imidazol-5-one (MIO), which is formed autocatalytically by cyclization and dehydration of residues Ala-Ser-Gly.

Its subcellular location is the cytoplasm. It catalyses the reaction L-histidine = trans-urocanate + NH4(+). It functions in the pathway amino-acid degradation; L-histidine degradation into L-glutamate; N-formimidoyl-L-glutamate from L-histidine: step 1/3. This chain is Histidine ammonia-lyase, found in Caldanaerobacter subterraneus subsp. tengcongensis (strain DSM 15242 / JCM 11007 / NBRC 100824 / MB4) (Thermoanaerobacter tengcongensis).